The sequence spans 159 residues: Phosphopantetheine adenylyltransferase (159 aa).

Threonine 10 serves as a coordination point for substrate. ATP is bound by residues 10-11 (TF) and histidine 18. The substrate site is built by lysine 42, methionine 74, and arginine 88. ATP is bound by residues 89–91 (GLR), glutamate 99, and 124–130 (WSFISSS).

The protein belongs to the bacterial CoaD family. Homohexamer. The cofactor is Mg(2+).

It is found in the cytoplasm. The enzyme catalyses (R)-4'-phosphopantetheine + ATP + H(+) = 3'-dephospho-CoA + diphosphate. The protein operates within cofactor biosynthesis; coenzyme A biosynthesis; CoA from (R)-pantothenate: step 4/5. In terms of biological role, reversibly transfers an adenylyl group from ATP to 4'-phosphopantetheine, yielding dephospho-CoA (dPCoA) and pyrophosphate. The polypeptide is Phosphopantetheine adenylyltransferase (Salmonella dublin (strain CT_02021853)).